The following is a 419-amino-acid chain: Hyaluronan synthase (419 aa).

Helical transmembrane passes span 8-28, 33-53, 318-338, 345-365, and 376-396; these read LIVL…MYLF, VGIY…LSFL, IVAL…VAIG, AIQL…IVAL, and PASF…LQPL.

The protein belongs to the NodC/HAS family. Requires Mg(2+) as cofactor.

The protein localises to the cell membrane. The catalysed reaction is [hyaluronan](n) + UDP-N-acetyl-alpha-D-glucosamine = N-acetyl-beta-D-glucosaminyl-(1-&gt;4)-[hyaluronan](n) + UDP + H(+). It carries out the reaction N-acetyl-beta-D-glucosaminyl-(1-&gt;4)-[hyaluronan](n) + UDP-alpha-D-glucuronate = [hyaluronan](n+1) + UDP + H(+). Its pathway is glycan biosynthesis; hyaluronan biosynthesis. Its function is as follows. Glycosaminoglycan synthesis. The hyaluronic acid capsule is involved in the pathogenicity of group A Streptococci; it may be the major virulence determinant. The chain is Hyaluronan synthase (hasA) from Streptococcus pyogenes serotype M3 (strain ATCC BAA-595 / MGAS315).